A 101-amino-acid polypeptide reads, in one-letter code: Putative pterin-4-alpha-carbinolamine dehydratase (101 aa).

This sequence belongs to the pterin-4-alpha-carbinolamine dehydratase family.

It carries out the reaction (4aS,6R)-4a-hydroxy-L-erythro-5,6,7,8-tetrahydrobiopterin = (6R)-L-erythro-6,7-dihydrobiopterin + H2O. This Nitrobacter hamburgensis (strain DSM 10229 / NCIMB 13809 / X14) protein is Putative pterin-4-alpha-carbinolamine dehydratase.